Reading from the N-terminus, the 415-residue chain is Levansucrase (415 aa).

Residues Trp-45, Asp-46, Ala-132, Arg-202, and Asp-203 each contribute to the sucrose site. Asp-46 serves as the catalytic Nucleophile. Catalysis depends on Glu-287, which acts as the Proton donor/acceptor.

Belongs to the glycosyl hydrolase 68 family.

It catalyses the reaction [6)-beta-D-fructofuranosyl-(2-&gt;](n) alpha-D-glucopyranoside + sucrose = [6)-beta-D-fructofuranosyl-(2-&gt;](n+1) alpha-D-glucopyranoside + D-glucose. In terms of biological role, catalyzes the synthesis of levan, a fructose polymer, by transferring the fructosyl moiety from sucrose to a growing acceptor molecule. In Rahnella aquatilis (strain ATCC 33071 / DSM 4594 / JCM 1683 / NBRC 105701 / NCIMB 13365 / CIP 78.65), this protein is Levansucrase.